Reading from the N-terminus, the 606-residue chain is Scavenger receptor class A member 3 (606 aa).

Topologically, residues Met-1 to Arg-56 are cytoplasmic. The helical; Signal-anchor for type II membrane protein transmembrane segment at Ile-57–Phe-77 threads the bilayer. Topologically, residues Arg-78 to Tyr-606 are extracellular. Asn-115, Asn-182, Asn-224, Asn-257, Asn-313, Asn-337, Asn-365, Asn-400, Asn-430, and Asn-451 each carry an N-linked (GlcNAc...) asparagine glycan. The tract at residues Ile-454 to Tyr-606 is disordered. The 59-residue stretch at Leu-455–Val-513 folds into the Collagen-like 1 domain. Over residues Asp-485–Pro-519 the composition is skewed to low complexity. The span at Gly-526 to Gly-535 shows a compositional bias: gly residues. Positions Gly-544–Gln-603 constitute a Collagen-like 2 domain. Composition is skewed to pro residues over residues Pro-545 to Ser-558 and Pro-591 to Pro-600.

As to expression, expressed ubiquitously.

It localises to the endoplasmic reticulum membrane. It is found in the golgi apparatus membrane. In terms of biological role, seems to protect cells by scavenging oxidative molecules or harmful products of oxidation. The polypeptide is Scavenger receptor class A member 3 (SCARA3) (Homo sapiens (Human)).